The chain runs to 61 residues: Protein SspF (61 aa).

It belongs to the alpha/beta-type SASP family.

Its function is as follows. May play some important role in either sporulation or the dormant spore. The sequence is that of Protein SspF (sspF) from Bacillus subtilis (strain 168).